Here is a 728-residue protein sequence, read N- to C-terminus: MNQPDLADDPDPSPEPLCIVCGQNHSPEENHFYTYTEDVDDDLICHICLQALLDPLDTPCGHTYCTLCLTNFLVEKDFCPVDRKPVVLQHCKKSSILVNKLLNKLLVTCPFTEHCTEVLQRCDLQHHFQTSCKGASHYGLTKDRKRRSQDGCPDGCASLMATTLSPEVSAAATISLMTDEPGLDNPAYVSSVEDGEPVANSSDSGRSNRTRARPFERSTMRSRSFKKINRALSALRRTKSGSVVANHVDQGRDNSENTTVPEVFPRLFHLIPDGEITSIKINRADPSESLSIRLVGGSETPLVHIIIQHIYRDGVIARDGRLLPGDIILKVNGMDISNVPHNYAVRLLRQPCQVLRLTVLREQKFRSRSNAHVPDSYGPRDDSFHVILNKSSPEEQLGIKLVRRVDEPGVFIFNVLNGGVADRHGQLEENDRVLAINGHDLRFGSPESAAHLIQASERRVHLVVSRQVRQSSPDIFQEAGWISNGQQSPGPGERNTASKPAATCHEKVVSVWKDPSESLGMTVGGGASHREWDLPIYVISVEPGGVISRDGRIKTGDILLNVNGIELTEVSRTEAVAILKSAPSSVVLKALEVKEQEAQEDCSPAALDSNHNVTPPGDWSPSWVMWLELPQYLCNCKDVILRRNTAGSLGFCIVGGYEEYSGNKPFFIKSIVEGTPAYNDGRIRCGDILLAVNGRSTSGMIHACLARMLKELKGRITLTIASWPGTFL.

The RING-type zinc finger occupies cysteine 45–arginine 83. Residues asparagine 185–tyrosine 188 carry the NPXY motif motif. A disordered region spans residues asparagine 185–methionine 220. The tract at residues proline 186 to valine 244 is interaction with MAGEB18. PDZ domains lie at serine 278–glutamate 362 and histidine 385–glutamine 467. Position 445 is a phosphoserine (serine 445). Residues tryptophan 481 to proline 500 are disordered. 2 consecutive PDZ domains span residues valine 508–valine 593 and aspartate 638–tryptophan 723.

As to quaternary structure, interacts with CXADR. Interacts with MAGEB18 and MAGEF1. Interacts with the phosphotyrosine interaction domain of all isoforms of NUMB. IGSF5/JAM4 interacts with isoform 2 through the second PDZ domain, other isoforms may also interact with IGSF5/JAM4. Isoform 1 and isoform 2 are expressed in the heart. Isoform 1 is also expressed in kidney, lung and skeletal muscle while isoform 2 is also expressed in brain.

It is found in the cytoplasm. It catalyses the reaction S-ubiquitinyl-[E2 ubiquitin-conjugating enzyme]-L-cysteine + [acceptor protein]-L-lysine = [E2 ubiquitin-conjugating enzyme]-L-cysteine + N(6)-ubiquitinyl-[acceptor protein]-L-lysine.. The protein operates within protein modification; protein ubiquitination. Its function is as follows. E3 ubiquitin-protein ligase that mediates ubiquitination and subsequent proteasomal degradation of NUMB. E3 ubiquitin ligases accept ubiquitin from an E2 ubiquitin-conjugating enzyme in the form of a thioester and then directly transfers the ubiquitin to targeted substrates. Mediates ubiquitination of isoform p66 and isoform p72 of NUMB, but not that of isoform p71 or isoform p65. Isoform 2 provides an endocytic scaffold for IGSF5/JAM4. The sequence is that of E3 ubiquitin-protein ligase LNX (Lnx1) from Mus musculus (Mouse).